Consider the following 134-residue polypeptide: Cytochrome b5 (134 aa).

The Cytochrome b5 heme-binding domain maps to 5 to 81 (KKVLGFEEVS…MEKYYIGEID (77 aa)). Residues His40 and His64 each coordinate heme. A helical transmembrane segment spans residues 107-127 (FMIKILQFLVPILILGLALVV).

The protein belongs to the cytochrome b5 family.

The protein resides in the endoplasmic reticulum membrane. The protein localises to the microsome membrane. Its function is as follows. Membrane bound hemoprotein which function as an electron carrier for several membrane bound oxygenases. This Brassica oleracea var. botrytis (Cauliflower) protein is Cytochrome b5 (CYB5).